The following is a 341-amino-acid chain: NADH-ubiquinone oxidoreductase chain 1 (341 aa).

A run of 10 helical transmembrane segments spans residues 2–22 (IINI…VAYL), 39–59 (PNFV…KLLL), 71–91 (IILV…WVVI), 104–124 (LGIL…LLSG), 141–161 (AQLI…IMFV), 175–195 (VVWY…ASVA), 212–230 (VAGY…FFLA), 243–263 (GYLL…NILF), 276–296 (LINS…FIWV), and 308–328 (LINF…LIIP).

It belongs to the complex I subunit 1 family. Complex I is composed of 37 different subunits.

The protein resides in the mitochondrion inner membrane. It carries out the reaction a ubiquinone + NADH + 5 H(+)(in) = a ubiquinol + NAD(+) + 4 H(+)(out). Its function is as follows. Core subunit of the mitochondrial membrane respiratory chain NADH dehydrogenase (Complex I) that is believed to belong to the minimal assembly required for catalysis. Complex I functions in the transfer of electrons from NADH to the respiratory chain. The immediate electron acceptor for the enzyme is believed to be ubiquinone. This Yarrowia lipolytica (strain CLIB 122 / E 150) (Yeast) protein is NADH-ubiquinone oxidoreductase chain 1 (ND1).